The following is a 30-amino-acid chain: Trypsin inhibitor 6 (30 aa).

Intrachain disulfides connect Cys-4–Cys-21, Cys-11–Cys-23, and Cys-17–Cys-29.

Belongs to the protease inhibitor I7 (squash-type serine protease inhibitor) family.

It is found in the secreted. Its function is as follows. Strongly inhibits trypsin, weakly inhibits chymotrypsin. The protein is Trypsin inhibitor 6 of Cyclanthera pedata (Achocha).